The following is a 536-amino-acid chain: ADP,ATP carrier protein 4 (536 aa).

Transmembrane regions (helical) follow at residues 44-64 (VLLFSLLFALLSYIDAFLYVL), 77-97 (SILFIKSVLVLPMTFFFIVIV), 109-129 (MLEVILIISSVFFLLFGFVIW), 172-194 (TMLYLVAELWGSLIISFMFFSRA), 205-225 (KFLPTISLISAVVFLSSGLLT), 244-264 (FSQVFIVTSALTVMSAITSFF), 309-329 (VVAASVCSNIFEAIYRGGIVL), 349-369 (AQIITSIFLLVMFFKPATHLI), and 378-398 (AITAPIVAIITLVLFFPMVFF). N-linked (GlcNAc...) asparagine glycans are attached at residues N400 and N421. Transmembrane regions (helical) follow at residues 465–485 (LGINIGKTIGSVYCTLVTVVF) and 493–513 (VVSVSTVFVGVFCVIWIRSIL).

Belongs to the ADP/ATP translocase tlc family.

The protein resides in the cell membrane. Its function is as follows. ATP transporter involved in the uptake of ATP from the host cell cytoplasm. Provides the microsporidian cell with host ATP in exchange for ADP. This is an obligate exchange system. This energy acquiring activity is an important component of microsporidian parasitism. This chain is ADP,ATP carrier protein 4 (NTT4), found in Encephalitozoon cuniculi (strain GB-M1) (Microsporidian parasite).